The following is a 186-amino-acid chain: Peptidyl-tRNA hydrolase (186 aa).

TRNA is bound at residue Tyr-14. The Proton acceptor role is filled by His-19. TRNA contacts are provided by Phe-64, Asn-66, and Asn-112.

This sequence belongs to the PTH family. Monomer.

The protein resides in the cytoplasm. The enzyme catalyses an N-acyl-L-alpha-aminoacyl-tRNA + H2O = an N-acyl-L-amino acid + a tRNA + H(+). In terms of biological role, hydrolyzes ribosome-free peptidyl-tRNAs (with 1 or more amino acids incorporated), which drop off the ribosome during protein synthesis, or as a result of ribosome stalling. Catalyzes the release of premature peptidyl moieties from peptidyl-tRNA molecules trapped in stalled 50S ribosomal subunits, and thus maintains levels of free tRNAs and 50S ribosomes. This Listeria monocytogenes serotype 4a (strain HCC23) protein is Peptidyl-tRNA hydrolase.